The following is a 227-amino-acid chain: Extracellular deoxyribonuclease (227 aa).

An N-terminal signal peptide occupies residues 1 to 20 (MFRPLLSFTLARLVSLPLHA).

This sequence belongs to the EndA/NucM nuclease family.

The protein resides in the secreted. This chain is Extracellular deoxyribonuclease, found in Aeromonas hydrophila.